A 729-amino-acid chain; its full sequence is Sodium-dependent neutral amino acid transporter B(0)AT2 (729 aa).

At 1-69 (MPKNSKVVKR…ERPAWNSKLQ (69 aa)) the chain is on the cytoplasmic side. Residues S25 and S55 each carry the phosphoserine modification. The disordered stretch occupies residues 42 to 61 (DVQEEKDTDAEDGSEADDER). Acidic residues predominate over residues 43 to 59 (VQEEKDTDAEDGSEADD). 3 helical membrane passes run 70 to 90 (YILA…FPYL), 98 to 117 (AYLL…LFFL), and 142 to 162 (GIGF…NVII). At 163–225 (GWTLFYFSQS…SSISDSGGLN (63 aa)) the chain is on the extracellular side. Residue N187 is glycosylated (N-linked (GlcNAc...) asparagine). The next 2 membrane-spanning stretches (helical) occupy residues 226–244 (WKMT…LAMI) and 253–270 (IMYF…CFLI). N276 carries N-linked (GlcNAc...) asparagine glycosylation. The next 2 helical transmembrane spans lie at 306 to 323 (VFFA…FSSY) and 335 to 356 (VLVS…FAVL). The Extracellular segment spans residues 357–452 (GFKANIVNEK…FIAFTEAMTH (96 aa)). N-linked (GlcNAc...) asparagine glycans are attached at residues N383 and N394. Transmembrane regions (helical) follow at residues 453-472 (FPAS…NLGL), 496-514 (ILTV…IFVQ), 530-550 (TLPL…VYGI), 571-592 (YMWK…IVNM), and 620-642 (VVCF…IRRC). The Cytoplasmic portion of the chain corresponds to 643-729 (NLIDDSSGNL…DMPDMPESDL (87 aa)). S687, S699, and S701 each carry phosphoserine.

The protein belongs to the sodium:neurotransmitter symporter (SNF) (TC 2.A.22) family. SLC6A15 subfamily. Significant expressed in brain, lung and kidney. In brain, mainly expressed int the cortex, the cerebellum and the brain stem.

It is found in the membrane. It carries out the reaction L-pipecolate(in) + Na(+)(in) = L-pipecolate(out) + Na(+)(out). The catalysed reaction is L-leucine(in) + Na(+)(in) = L-leucine(out) + Na(+)(out). The enzyme catalyses L-isoleucine(in) + Na(+)(in) = L-isoleucine(out) + Na(+)(out). It catalyses the reaction L-methionine(in) + Na(+)(in) = L-methionine(out) + Na(+)(out). It carries out the reaction L-proline(in) + Na(+)(in) = L-proline(out) + Na(+)(out). The catalysed reaction is L-alanine(in) + Na(+)(in) = L-alanine(out) + Na(+)(out). The enzyme catalyses L-asparagine(in) + Na(+)(in) = L-asparagine(out) + Na(+)(out). It catalyses the reaction L-valine(in) + Na(+)(in) = L-valine(out) + Na(+)(out). It carries out the reaction L-cysteine(in) + Na(+)(in) = L-cysteine(out) + Na(+)(out). The catalysed reaction is L-glutamine(in) + Na(+)(in) = L-glutamine(out) + Na(+)(out). The enzyme catalyses L-serine(in) + Na(+)(in) = L-serine(out) + Na(+)(out). It catalyses the reaction L-threonine(in) + Na(+)(in) = L-threonine(out) + Na(+)(out). It carries out the reaction L-phenylalanine(in) + Na(+)(in) = L-phenylalanine(out) + Na(+)(out). Functions as a sodium-dependent neutral amino acid transporter. Exhibits preference for methionine and for the branched-chain amino acids, particularly leucine, valine and isoleucine. Can also transport low-affinity substrates such as alanine, phenylalanine, glutamine and pipecolic acid. Mediates the saturable, pH-sensitive and electrogenic cotransport of proline and sodium ions with a stoichiometry of 1:1. May have a role as transporter for neurotransmitter precursors into neurons. In contrast to other members of the neurotransmitter transporter family, does not appear to be chloride-dependent. The sequence is that of Sodium-dependent neutral amino acid transporter B(0)AT2 (Slc6a15) from Mus musculus (Mouse).